A 348-amino-acid polypeptide reads, in one-letter code: Serine/threonine-protein kinase SBK2 (348 aa).

The tract at residues 1 to 25 (MPGKQSEEGPAEAGASEDSEEEGLG) is disordered. In terms of domain architecture, Protein kinase spans 62 to 330 (YEEVRPLGQG…IREHLGRPWR (269 aa)). ATP is bound by residues 68 to 76 (LGQGCYGRV) and lysine 91. Aspartate 183 serves as the catalytic Proton acceptor.

This sequence belongs to the protein kinase superfamily. Ser/Thr protein kinase family. STKL subfamily.

The catalysed reaction is L-seryl-[protein] + ATP = O-phospho-L-seryl-[protein] + ADP + H(+). The enzyme catalyses L-threonyl-[protein] + ATP = O-phospho-L-threonyl-[protein] + ADP + H(+). The chain is Serine/threonine-protein kinase SBK2 (SBK2) from Homo sapiens (Human).